The chain runs to 84 residues: Large ribosomal subunit protein bL27 (84 aa).

It belongs to the bacterial ribosomal protein bL27 family.

This is Large ribosomal subunit protein bL27 from Karelsulcia muelleri (strain GWSS) (Sulcia muelleri).